Reading from the N-terminus, the 103-residue chain is Colicin-V (103 aa).

Positions 1 to 15 are excised as a propeptide; sequence MRTLTLNELDSVSGG. Residues Cys-91 and Cys-102 are joined by a disulfide bond.

It is found in the secreted. Functionally, colicin V kills sensitive cells by disrupting the membrane potential. Its function is as follows. Colicins are polypeptide toxins produced by, and active against E.coli and closely related bacteria. This Escherichia coli protein is Colicin-V (cvaC).